Reading from the N-terminus, the 113-residue chain is MSQEIYDYANQLERAVRALPEYQKVLEVKEAIQADVSASELFDEFVAMQEKIQGMMQSGQMPTAEEQTSIQELSQKIEANDQLKAYFEAQQALSVYMSDIERIVFAPLKDLVK.

It belongs to the UPF0342 family.

In Streptococcus pyogenes serotype M1, this protein is UPF0342 protein SPy_0811/M5005_Spy0626.